We begin with the raw amino-acid sequence, 538 residues long: CTP synthase (538 aa).

The segment at 1–265 is amidoligase domain; that stretch reads MARYIFVTGG…DLQVLNYFKL (265 aa). Residue Ser-13 coordinates CTP. Ser-13 serves as a coordination point for UTP. ATP contacts are provided by residues 14 to 19 and Asp-71; that span reads SLGKGL. Asp-71 and Glu-139 together coordinate Mg(2+). CTP is bound by residues 146 to 148, 186 to 191, and Lys-222; these read DIE and KTKPTQ. Residues 186–191 and Lys-222 contribute to the UTP site; that span reads KTKPTQ. The Glutamine amidotransferase type-1 domain maps to 291–538; the sequence is NIAIIGKYVE…SFIKAAKNHK (248 aa). Residue Gly-353 participates in L-glutamine binding. Cys-380 acts as the Nucleophile; for glutamine hydrolysis in catalysis. Residues 381–384, Glu-404, and Arg-468 contribute to the L-glutamine site; that span reads YGMQ. Residues His-513 and Glu-515 contribute to the active site.

Belongs to the CTP synthase family. As to quaternary structure, homotetramer.

The catalysed reaction is UTP + L-glutamine + ATP + H2O = CTP + L-glutamate + ADP + phosphate + 2 H(+). It carries out the reaction L-glutamine + H2O = L-glutamate + NH4(+). It catalyses the reaction UTP + NH4(+) + ATP = CTP + ADP + phosphate + 2 H(+). The protein operates within pyrimidine metabolism; CTP biosynthesis via de novo pathway; CTP from UDP: step 2/2. Its activity is regulated as follows. Allosterically activated by GTP, when glutamine is the substrate; GTP has no effect on the reaction when ammonia is the substrate. The allosteric effector GTP functions by stabilizing the protein conformation that binds the tetrahedral intermediate(s) formed during glutamine hydrolysis. Inhibited by the product CTP, via allosteric rather than competitive inhibition. In terms of biological role, catalyzes the ATP-dependent amination of UTP to CTP with either L-glutamine or ammonia as the source of nitrogen. Regulates intracellular CTP levels through interactions with the four ribonucleotide triphosphates. The chain is CTP synthase from Pelagibacter ubique (strain HTCC1062).